A 274-amino-acid chain; its full sequence is uncharacterized protein (274 aa).

A signal peptide spans 1-21 (MRKLTLLPLLLIITGLLTVQA). Residues 249–266 (TSAFVILTASALIFIYLF) form a helical membrane-spanning segment.

Its subcellular location is the membrane. This is an uncharacterized protein from Archaeoglobus fulgidus (strain ATCC 49558 / DSM 4304 / JCM 9628 / NBRC 100126 / VC-16).